A 292-amino-acid chain; its full sequence is N-acetylneuraminate lyase (292 aa).

Residues Ser47 and Thr48 each contribute to the aceneuramate site. The Proton donor role is filled by Tyr136. Lys164 acts as the Schiff-base intermediate with substrate in catalysis. Aceneuramate-binding residues include Thr166, Gly188, Asp190, Glu191, and Ser207.

This sequence belongs to the DapA family. NanA subfamily. Homotetramer.

It localises to the cytoplasm. It carries out the reaction aceneuramate = aldehydo-N-acetyl-D-mannosamine + pyruvate. Its pathway is amino-sugar metabolism; N-acetylneuraminate degradation; D-fructose 6-phosphate from N-acetylneuraminate: step 1/5. Catalyzes the reversible aldol cleavage of N-acetylneuraminic acid (sialic acid; Neu5Ac) to form pyruvate and N-acetylmannosamine (ManNAc) via a Schiff base intermediate. In Histophilus somni (strain 129Pt) (Haemophilus somnus), this protein is N-acetylneuraminate lyase.